The primary structure comprises 419 residues: Capsule polysaccharide modification protein LipB (419 aa).

The protein resides in the cell inner membrane. Its function is as follows. Involved in the phospholipid modification of the capsular polysaccharide, a strong requirement for its translocation to the cell surface. The chain is Capsule polysaccharide modification protein LipB (lipB) from Neisseria meningitidis serogroup B (strain ATCC BAA-335 / MC58).